The primary structure comprises 1028 residues: MPPRRDLKKILIIGSGPITIGQAAEFDYSGTQAVKALRGAGYRVVLVNSNPATIMTDPELAERTYIEPLDLEHLEGILAREAPDALLPTLGGQTGLNLAMALHEEGILQKYGVELIGAKAEAIRKGEDREAFQEAMQRIGLEVPRGQLVGSVEEGLHFAREVGFPVVVRPSFTLGGTGGGIAHDEAELVEVLSRGLTLSPVHTALVEESVLGWKEFELEVMRDHADTVVIITSIENVDPMGVHTGDSITVAPAQTLSDVEYQRMRDAAKAIIREIGVETGGSNIQFAVDPKTGRQVVIEMNPRVSRSSALASKATGFPIAKIAALLAVGYRLDELPNDITRKTPASFEPTIDYVVVKIPRFAFEKFRPLRNTLGELKDELTTQMKSVGEVMAIGRTFKEALMKALRGLERDVRALAGVRTEELEKKLYPNPDRVYAVMELLRRGMPVEELYQATRIDPWFLHQMKEVVEAEEWLKTHPPKDREDWRFYKGLGLTDRRIGELVGKGEKEVRAERKALGVVPVYKTVDTCAAEFEAYTPYHYSTYELEDEVWPSQKPKVVILGSGPIRIGQGVEFDYATVHAVWALKEAGYETIMVNSNPETVSTDYDTADRLYFEPLTLEDVLNIVEHEKPIGVIATLGGQTPLKLAKGLEEAGVRLLGTPFSAIHQAEDREAFHALCQRLGIPQPEGRVAQSPEEALRLAPEVGFPLLVRPSYVLGGRAMQVVRDEGELKRYLEEVYAPLEERPSILLDRFLEGAVELDVDALSDGQEVMVAGIMEHVERAGVHSGDSATLLPPVHVPEEALKKVRDYTRRLALALGVRGLLNVQYAVVGEEVYVLEANPRASRTVPFVSKAIGVPLAKLAALIAVGKTLKELGVRDLDPVPPYYAAKEVVIPWIKFPGVIPELGPEMRSTGESMGIDQDPYLAYYKAELGAGQRLPLSGRVRFIGEGLEDLKALYQEAGFALTEGEDYDLLISLVPDPELRRAVERGLPFITTREGAWWSLKAILRARESGLRVQSLQDWHQKAPRG.

The segment at 1 to 409 (MPPRRDLKKI…ALMKALRGLE (409 aa)) is carboxyphosphate synthetic domain. Arginine 129, arginine 169, glycine 175, glycine 176, glutamate 208, valine 210, glutamate 215, glycine 241, valine 242, histidine 243, glutamine 285, and glutamate 299 together coordinate ATP. Residues 133–328 (QEAMQRIGLE…IAKIAALLAV (196 aa)) form the ATP-grasp 1 domain. Mg(2+)-binding residues include glutamine 285, glutamate 299, and asparagine 301. Glutamine 285, glutamate 299, and asparagine 301 together coordinate Mn(2+). The oligomerization domain stretch occupies residues 410-549 (RDVRALAGVR…YSTYELEDEV (140 aa)). Residues 550 to 933 (WPSQKPKVVI…AYYKAELGAG (384 aa)) are carbamoyl phosphate synthetic domain. Residues 674–866 (HALCQRLGIP…LAKLAALIAV (193 aa)) form the ATP-grasp 2 domain. 10 residues coordinate ATP: arginine 710, arginine 750, leucine 752, glutamate 757, glycine 782, valine 783, histidine 784, serine 785, glutamine 825, and glutamate 837. The Mg(2+) site is built by glutamine 825, glutamate 837, and asparagine 839. Positions 825, 837, and 839 each coordinate Mn(2+). Positions 934–1028 (QRLPLSGRVR…QDWHQKAPRG (95 aa)) constitute an MGS-like domain. The segment at 934 to 1028 (QRLPLSGRVR…QDWHQKAPRG (95 aa)) is allosteric domain.

This sequence belongs to the CarB family. As to quaternary structure, composed of two chains; the small (or glutamine) chain promotes the hydrolysis of glutamine to ammonia, which is used by the large (or ammonia) chain to synthesize carbamoyl phosphate. Tetramer of heterodimers (alpha,beta)4. Mg(2+) serves as cofactor. Mn(2+) is required as a cofactor.

It carries out the reaction hydrogencarbonate + L-glutamine + 2 ATP + H2O = carbamoyl phosphate + L-glutamate + 2 ADP + phosphate + 2 H(+). The enzyme catalyses hydrogencarbonate + NH4(+) + 2 ATP = carbamoyl phosphate + 2 ADP + phosphate + 2 H(+). It functions in the pathway amino-acid biosynthesis; L-arginine biosynthesis; carbamoyl phosphate from bicarbonate: step 1/1. It participates in pyrimidine metabolism; UMP biosynthesis via de novo pathway; (S)-dihydroorotate from bicarbonate: step 1/3. In terms of biological role, large subunit of the glutamine-dependent carbamoyl phosphate synthetase (CPSase). CPSase catalyzes the formation of carbamoyl phosphate from the ammonia moiety of glutamine, carbonate, and phosphate donated by ATP, constituting the first step of 2 biosynthetic pathways, one leading to arginine and/or urea and the other to pyrimidine nucleotides. The large subunit (synthetase) binds the substrates ammonia (free or transferred from glutamine from the small subunit), hydrogencarbonate and ATP and carries out an ATP-coupled ligase reaction, activating hydrogencarbonate by forming carboxy phosphate which reacts with ammonia to form carbamoyl phosphate. This chain is Carbamoyl phosphate synthase large chain, found in Thermus thermophilus (strain ATCC 27634 / DSM 579 / HB8).